We begin with the raw amino-acid sequence, 1223 residues long: RNA-binding protein 20 (1223 aa).

Disordered regions lie at residues 1 to 59 (MVLA…QAGL), 238 to 288 (QAYG…PTSQ), and 306 to 381 (GEVG…GARR). Over residues 29 to 57 (APAPPAPPGPRGMQPPPPPPPPPPPPPQA) the composition is skewed to pro residues. Composition is skewed to polar residues over residues 238 to 261 (QAYGSETDSQPSFLPASASTSGSV) and 314 to 331 (GPNSQWESPHGFSGQSKP). Residues 410-444 (HLPHICSICDKKVFDLKDWELHVKGKLHAQKCLLF) form a U1-type zinc finger. The RRM domain occupies 520-595 (RVVHICNLPE…EKLLIRMSKR (76 aa)). Positions 626–636 (EADRYGPERPR) are enriched in basic and acidic residues. Disordered stretches follow at residues 626 to 902 (EADR…TNME), 971 to 995 (EISLKSPKEPPSASTSCPSDMDVEM), and 1042 to 1102 (MSSP…STQE). Residues 630–657 (YGPERPRSRSPVSRSLSPRSHTPSFTSC) are RS. A phosphoserine mark is found at S637, S639, S642, S644, S662, and S681. Residues 638–662 (RSPVSRSLSPRSHTPSFTSCSSSHS) show a composition bias toward low complexity. Basic and acidic residues-rich tracts occupy residues 676–711 (DSWEHSPYARREEERGPAPWRENGEDKRDRTDMWAH) and 718–737 (RQVDKTELDERLEGGRGYRE). A compositionally biased stretch (low complexity) spans 742-752 (SGSPSSLHSVS). S744 carries the phosphoserine modification. 2 stretches are compositionally biased toward basic and acidic residues: residues 755–774 (KSREDGYYRKEPKGKSDKYL) and 786–852 (RKDE…KEEQ). 8 positions are modified to phosphoserine: S803, S861, S872, S887, S889, S973, S976, and S1044. A compositionally biased stretch (basic and acidic residues) spans 864–884 (RQEKETESSDAENTRTRKEQD). Polar residues predominate over residues 1083–1102 (STPTETDLQSQACQGVSTQE). Phosphoserine is present on residues S1111 and S1116. The segment at 1157-1188 (FYCKLCGLFYTSEEMAKMSHCRSAVHYRNLQK) adopts a Matrin-type zinc-finger fold. Positions 1197–1223 (GLKETEGAGSPRPEDSGIVPHFERKKL) are disordered. S1206 carries the post-translational modification Phosphoserine.

As to quaternary structure, associates with components of the U1 and U2 U1 small nuclear ribonucleoprotein complexes. Post-translationally, phosphorylation regulates the subcellular localization. Phosphorylation of Ser-637 and Ser-639 in the RS (arginine/serine-rich) region promotes nuclear localization of the protein. In contrast, phosphorylation of the C-terminal disordered region promotes localization to cytoplasmic ribonucleoprotein granules.

Its subcellular location is the nucleus. It is found in the cytoplasm. The protein localises to the cytoplasmic ribonucleoprotein granule. In terms of biological role, RNA-binding protein that acts as a regulator of mRNA splicing of a subset of genes encoding key structural proteins involved in cardiac development, such as TTN (Titin), CACNA1C, CAMK2D or PDLIM5/ENH. Acts as a repressor of mRNA splicing: specifically binds the 5'UCUU-3' motif that is predominantly found within intronic sequences of pre-mRNAs, leading to the exclusion of specific exons in target transcripts. RBM20-mediated exon skipping is hormone-dependent and is essential for TTN isoform transition in both cardiac and skeletal muscles. RBM20-mediated exon skipping of TTN provides substrates for the formation of circular RNA (circRNAs) from the TTN transcripts. Together with RBM24, promotes the expression of short isoforms of PDLIM5/ENH in cardiomyocytes. This is RNA-binding protein 20 from Sus scrofa (Pig).